A 407-amino-acid polypeptide reads, in one-letter code: Probable tRNA sulfurtransferase (407 aa).

The THUMP domain maps to asparagine 61–valine 165. ATP contacts are provided by residues methionine 183–leucine 184, histidine 208–phenylalanine 209, arginine 265, glycine 287, and glutamine 296.

The protein belongs to the ThiI family.

It localises to the cytoplasm. The enzyme catalyses [ThiI sulfur-carrier protein]-S-sulfanyl-L-cysteine + a uridine in tRNA + 2 reduced [2Fe-2S]-[ferredoxin] + ATP + H(+) = [ThiI sulfur-carrier protein]-L-cysteine + a 4-thiouridine in tRNA + 2 oxidized [2Fe-2S]-[ferredoxin] + AMP + diphosphate. The catalysed reaction is [ThiS sulfur-carrier protein]-C-terminal Gly-Gly-AMP + S-sulfanyl-L-cysteinyl-[cysteine desulfurase] + AH2 = [ThiS sulfur-carrier protein]-C-terminal-Gly-aminoethanethioate + L-cysteinyl-[cysteine desulfurase] + A + AMP + 2 H(+). It functions in the pathway cofactor biosynthesis; thiamine diphosphate biosynthesis. Functionally, catalyzes the ATP-dependent transfer of a sulfur to tRNA to produce 4-thiouridine in position 8 of tRNAs, which functions as a near-UV photosensor. Also catalyzes the transfer of sulfur to the sulfur carrier protein ThiS, forming ThiS-thiocarboxylate. This is a step in the synthesis of thiazole, in the thiamine biosynthesis pathway. The sulfur is donated as persulfide by IscS. The chain is Probable tRNA sulfurtransferase from Staphylococcus aureus (strain N315).